Consider the following 365-residue polypeptide: Peptide chain release factor 2 (365 aa).

Position 252 is an N5-methylglutamine (Gln-252).

This sequence belongs to the prokaryotic/mitochondrial release factor family. Post-translationally, methylated by PrmC. Methylation increases the termination efficiency of RF2.

The protein localises to the cytoplasm. Its function is as follows. Peptide chain release factor 2 directs the termination of translation in response to the peptide chain termination codons UGA and UAA. The polypeptide is Peptide chain release factor 2 (Yersinia enterocolitica serotype O:8 / biotype 1B (strain NCTC 13174 / 8081)).